The primary structure comprises 75 residues: Exodeoxyribonuclease 7 small subunit (75 aa).

This sequence belongs to the XseB family. In terms of assembly, heterooligomer composed of large and small subunits.

The protein resides in the cytoplasm. The catalysed reaction is Exonucleolytic cleavage in either 5'- to 3'- or 3'- to 5'-direction to yield nucleoside 5'-phosphates.. Bidirectionally degrades single-stranded DNA into large acid-insoluble oligonucleotides, which are then degraded further into small acid-soluble oligonucleotides. This chain is Exodeoxyribonuclease 7 small subunit, found in Thermotoga maritima (strain ATCC 43589 / DSM 3109 / JCM 10099 / NBRC 100826 / MSB8).